A 23-amino-acid chain; its full sequence is Acidic phospholipase CHA-E6a (23 aa).

The protein belongs to the phospholipase A2 family. Group II subfamily. D49 sub-subfamily. Requires Ca(2+) as cofactor. Post-translationally, contains 7 disulfide bonds. As to expression, expressed by the venom gland.

The protein localises to the secreted. It catalyses the reaction a 1,2-diacyl-sn-glycero-3-phosphocholine + H2O = a 1-acyl-sn-glycero-3-phosphocholine + a fatty acid + H(+). Functionally, snake venom phospholipase A2 (PLA2) that shows high lipolytic (1048 umol/mg/min) and weak ADP-induced platelet aggregation activities. Also shows weak anticoagulant activity (IC(50) is less than 1.0 uM). PLA2 catalyzes the calcium-dependent hydrolysis of the 2-acyl groups in 3-sn-phosphoglycerides. In Crotalus horridus (Timber rattlesnake), this protein is Acidic phospholipase CHA-E6a.